The sequence spans 471 residues: 1,3-beta-glucanosyltransferase GAS4 (471 aa).

Residues Met-1–Ala-21 form the signal peptide. Residues Cys-70 and Cys-99 are joined by a disulfide bond. Tyr-88 contacts (1,3-beta-D-glucosyl)n. The N-linked (GlcNAc...) asparagine glycan is linked to Asn-151. Residues Asn-160, Glu-161, Asp-203, and Arg-208 each coordinate (1,3-beta-D-glucosyl)n. The active-site Proton donor is Glu-161. 2 cysteine pairs are disulfide-bonded: Cys-217–Cys-354 and Cys-238–Cys-269. Glu-266 functions as the Nucleophile in the catalytic mechanism. Tyr-298 is a binding site for (1,3-beta-D-glucosyl)n. An N-linked (GlcNAc...) asparagine glycan is attached at Asn-398. The GPI-anchor amidated asparagine moiety is linked to residue Asn-447. The propeptide at Ser-448 to Phe-471 is removed in mature form.

It belongs to the glycosyl hydrolase 72 family.

The protein localises to the cell membrane. In terms of biological role, splits internally a 1,3-beta-glucan molecule and transfers the newly generated reducing end (the donor) to the non-reducing end of another 1,3-beta-glucan molecule (the acceptor) forming a 1,3-beta linkage, resulting in the elongation of 1,3-beta-glucan chains in the cell wall. Involved in spore wall assembly. This Saccharomyces cerevisiae (strain ATCC 204508 / S288c) (Baker's yeast) protein is 1,3-beta-glucanosyltransferase GAS4 (GAS4).